We begin with the raw amino-acid sequence, 560 residues long: Oxygen-dependent choline dehydrogenase (560 aa).

6 to 35 (DYIIIGGGSAGSVLGGRLSEDVSNNVLVLE) is a binding site for FAD. The active-site Proton acceptor is the histidine 472.

The protein belongs to the GMC oxidoreductase family. Requires FAD as cofactor.

It carries out the reaction choline + A = betaine aldehyde + AH2. It catalyses the reaction betaine aldehyde + NAD(+) + H2O = glycine betaine + NADH + 2 H(+). It participates in amine and polyamine biosynthesis; betaine biosynthesis via choline pathway; betaine aldehyde from choline (cytochrome c reductase route): step 1/1. Involved in the biosynthesis of the osmoprotectant glycine betaine. Catalyzes the oxidation of choline to betaine aldehyde and betaine aldehyde to glycine betaine at the same rate. The polypeptide is Oxygen-dependent choline dehydrogenase (Staphylococcus xylosus).